The primary structure comprises 198 residues: Protein ORFi in retron Ec67 (198 aa).

It belongs to the CI repressor protein family.

This is Protein ORFi in retron Ec67 from Escherichia coli.